The sequence spans 411 residues: CinA-like protein (411 aa).

The protein belongs to the CinA family.

This chain is CinA-like protein, found in Dictyoglomus thermophilum (strain ATCC 35947 / DSM 3960 / H-6-12).